Here is a 598-residue protein sequence, read N- to C-terminus: Probable translation initiation factor IF-2 (598 aa).

The tr-type G domain occupies 8–226 (IRQPIISVLG…VTGLAQRFLE (219 aa)). The tract at residues 17–24 (GHVDHGKT) is G1. Position 17 to 24 (17 to 24 (GHVDHGKT)) interacts with GTP. The tract at residues 42–46 (GITQH) is G2. The tract at residues 81–84 (DTPG) is G3. Residues 81 to 85 (DTPGH) and 135 to 138 (NKVD) contribute to the GTP site. The interval 135–138 (NKVD) is G4. Positions 203 to 205 (SGV) are G5.

This sequence belongs to the TRAFAC class translation factor GTPase superfamily. Classic translation factor GTPase family. IF-2 subfamily.

Its function is as follows. Function in general translation initiation by promoting the binding of the formylmethionine-tRNA to ribosomes. Seems to function along with eIF-2. This Methanopyrus kandleri (strain AV19 / DSM 6324 / JCM 9639 / NBRC 100938) protein is Probable translation initiation factor IF-2.